A 628-amino-acid chain; its full sequence is Glutamyl-tRNA(Gln) amidotransferase subunit E (628 aa).

Belongs to the GatB/GatE family. GatE subfamily. Heterodimer of GatD and GatE.

The catalysed reaction is L-glutamyl-tRNA(Gln) + L-glutamine + ATP + H2O = L-glutaminyl-tRNA(Gln) + L-glutamate + ADP + phosphate + H(+). Allows the formation of correctly charged Gln-tRNA(Gln) through the transamidation of misacylated Glu-tRNA(Gln) in organisms which lack glutaminyl-tRNA synthetase. The reaction takes place in the presence of glutamine and ATP through an activated gamma-phospho-Glu-tRNA(Gln). The GatDE system is specific for glutamate and does not act on aspartate. The chain is Glutamyl-tRNA(Gln) amidotransferase subunit E from Thermococcus gammatolerans (strain DSM 15229 / JCM 11827 / EJ3).